The following is a 417-amino-acid chain: Serine hydroxymethyltransferase (417 aa).

Residues L112 and 116–118 each bind (6S)-5,6,7,8-tetrahydrofolate; that span reads GHL. Residue K221 is modified to N6-(pyridoxal phosphate)lysine. E247 contacts (6S)-5,6,7,8-tetrahydrofolate.

Belongs to the SHMT family. In terms of assembly, homodimer. Requires pyridoxal 5'-phosphate as cofactor.

It is found in the cytoplasm. It carries out the reaction (6R)-5,10-methylene-5,6,7,8-tetrahydrofolate + glycine + H2O = (6S)-5,6,7,8-tetrahydrofolate + L-serine. It participates in one-carbon metabolism; tetrahydrofolate interconversion. Its pathway is amino-acid biosynthesis; glycine biosynthesis; glycine from L-serine: step 1/1. In terms of biological role, catalyzes the reversible interconversion of serine and glycine with tetrahydrofolate (THF) serving as the one-carbon carrier. This reaction serves as the major source of one-carbon groups required for the biosynthesis of purines, thymidylate, methionine, and other important biomolecules. Also exhibits THF-independent aldolase activity toward beta-hydroxyamino acids, producing glycine and aldehydes, via a retro-aldol mechanism. The polypeptide is Serine hydroxymethyltransferase (Borrelia garinii subsp. bavariensis (strain ATCC BAA-2496 / DSM 23469 / PBi) (Borreliella bavariensis)).